The sequence spans 621 residues: MAU2 chromatid cohesion factor homolog (621 aa).

TPR repeat units follow at residues 96–129 (FDTA…SQNN), 451–484 (GGFY…ANAE), and 491–524 (SCSL…ASKI).

It belongs to the SCC4/mau-2 family. Interacts with Nipped-B to form the cohesin loading complex.

It is found in the nucleus. The protein localises to the nucleoplasm. In terms of biological role, required for association of the cohesin complex with chromatin during interphase. Plays a role in sister chromatid cohesion and normal progression through prometaphase. This is MAU2 chromatid cohesion factor homolog from Drosophila virilis (Fruit fly).